The chain runs to 501 residues: Glycerol kinase (501 aa).

Threonine 11 contacts ADP. ATP is bound by residues threonine 11, threonine 12, and serine 13. Residue threonine 11 participates in sn-glycerol 3-phosphate binding. Residue arginine 15 participates in ADP binding. The sn-glycerol 3-phosphate site is built by arginine 81, glutamate 82, tyrosine 133, and aspartate 242. Residues arginine 81, glutamate 82, tyrosine 133, aspartate 242, and glutamine 243 each coordinate glycerol. 2 residues coordinate ADP: threonine 264 and glycine 307. Residues threonine 264, glycine 307, glutamine 311, and glycine 409 each coordinate ATP. Positions 409 and 413 each coordinate ADP.

Belongs to the FGGY kinase family.

The catalysed reaction is glycerol + ATP = sn-glycerol 3-phosphate + ADP + H(+). Its pathway is polyol metabolism; glycerol degradation via glycerol kinase pathway; sn-glycerol 3-phosphate from glycerol: step 1/1. Its activity is regulated as follows. Inhibited by fructose 1,6-bisphosphate (FBP). In terms of biological role, key enzyme in the regulation of glycerol uptake and metabolism. Catalyzes the phosphorylation of glycerol to yield sn-glycerol 3-phosphate. The protein is Glycerol kinase of Borrelia garinii subsp. bavariensis (strain ATCC BAA-2496 / DSM 23469 / PBi) (Borreliella bavariensis).